The sequence spans 472 residues: WASH complex subunit 1 (472 aa).

The segment at 1 to 51 (MPQNRSMESQAYSLPLILPDLRREEAIHQITDTLQHLQTVSNDIFSRILQR) is required for WASH complex assembly. 3 disordered regions span residues 289 to 365 (ENSR…SDGR), 377 to 412 (GIGK…GDLM), and 426 to 472 (ISGK…DWES). Composition is skewed to pro residues over residues 301–319 (LPPP…PPEP) and 327–336 (SLAPPLPIPA). The tract at residues 352-472 (QGAPKEVVNP…GDGDEEDWES (121 aa)) is VCA. Residues 364–386 (GRASLLESIRQAGGIGKAKLRNV) form the WH2 domain. The segment covering 385–401 (NVKEKKLEKKKMKEQEQ) has biased composition (basic and acidic residues).

This sequence belongs to the WASH1 family. Component of the WASH complex.

The protein resides in the early endosome membrane. It is found in the recycling endosome membrane. Its function is as follows. Acts as a nucleation-promoting factor at the surface of endosomes, where it recruits and activates the Arp2/3 complex to induce actin polymerization, playing a key role in the fission of tubules that serve as transport intermediates during endosome sorting. In Xenopus tropicalis (Western clawed frog), this protein is WASH complex subunit 1.